The sequence spans 122 residues: Beta-2-microglobulin (122 aa).

An N-terminal signal peptide occupies residues 1-22 (MMARIFILALLGQLCFLPYLDA). One can recognise an Ig-like C1-type domain in the interval 27–115 (PKVQVYSRHP…HLTLQEPKVV (89 aa)). Cys47 and Cys102 are oxidised to a cystine.

It belongs to the beta-2-microglobulin family. Heterodimer of an alpha chain and a beta chain. Beta-2-microglobulin is the beta-chain of major histocompatibility complex class I molecules.

It localises to the secreted. Functionally, component of the class I major histocompatibility complex (MHC). Involved in the presentation of peptide antigens to the immune system. The polypeptide is Beta-2-microglobulin (B2M) (Trichosurus vulpecula (Brush-tailed possum)).